A 389-amino-acid polypeptide reads, in one-letter code: S-adenosylmethionine synthase (389 aa).

His19 contributes to the ATP binding site. Residue Asp21 coordinates Mg(2+). K(+) is bound at residue Glu47. L-methionine is bound by residues Glu60 and Gln103. Residues 103 to 113 (QSVDIAQGVSR) form a flexible loop region. Residues 168 to 170 (DGK), 234 to 235 (RF), Asp243, 249 to 250 (RK), Ala266, and Lys270 each bind ATP. L-methionine is bound at residue Asp243. Residue Lys274 coordinates L-methionine.

This sequence belongs to the AdoMet synthase family. In terms of assembly, homotetramer; dimer of dimers. The cofactor is Mg(2+). Requires K(+) as cofactor.

Its subcellular location is the cytoplasm. It carries out the reaction L-methionine + ATP + H2O = S-adenosyl-L-methionine + phosphate + diphosphate. The protein operates within amino-acid biosynthesis; S-adenosyl-L-methionine biosynthesis; S-adenosyl-L-methionine from L-methionine: step 1/1. In terms of biological role, catalyzes the formation of S-adenosylmethionine (AdoMet) from methionine and ATP. The overall synthetic reaction is composed of two sequential steps, AdoMet formation and the subsequent tripolyphosphate hydrolysis which occurs prior to release of AdoMet from the enzyme. The sequence is that of S-adenosylmethionine synthase from Solidesulfovibrio magneticus (strain ATCC 700980 / DSM 13731 / RS-1) (Desulfovibrio magneticus).